The chain runs to 216 residues: 3-keto-L-gulonate-6-phosphate decarboxylase UlaD (216 aa).

Aspartate 11 serves as a coordination point for substrate. Mg(2+) is bound by residues glutamate 33 and aspartate 62. Arginine 192 lines the substrate pocket.

The protein belongs to the HPS/KGPDC family. KGPDC subfamily. In terms of assembly, homodimer. Mg(2+) serves as cofactor.

It catalyses the reaction 3-dehydro-L-gulonate 6-phosphate + H(+) = L-xylulose 5-phosphate + CO2. Its pathway is cofactor degradation; L-ascorbate degradation; D-xylulose 5-phosphate from L-ascorbate: step 2/4. Catalyzes the decarboxylation of 3-keto-L-gulonate-6-P into L-xylulose-5-P. Is involved in the anaerobic L-ascorbate utilization. The chain is 3-keto-L-gulonate-6-phosphate decarboxylase UlaD from Escherichia coli O127:H6 (strain E2348/69 / EPEC).